Reading from the N-terminus, the 1581-residue chain is Mediator of RNA polymerase II transcription subunit 1 (1581 aa).

Positions 1–670 are interaction with the Mediator complex and THRA; that stretch reads MKAQGETEES…YGSSPLERQN (670 aa). The interaction with ESR1 stretch occupies residues 16-590; sequence MSSLLERLHA…SIKDRHESVG (575 aa). Interaction with the Mediator complex stretches follow at residues 108–212 and 215–390; these read FYVE…GYLT and SGGH…SLQG. Residues 405–644 form an interaction with THRA region; the sequence is PLILNLIRHQ…MAGNTKNHPM (240 aa). The segment at 542–788 is interaction with VDR; sequence PASSPGYGMT…TDILSDIAEE (247 aa). The residue at position 588 (serine 588) is a Phosphoserine. The short motif at 604–608 is the LXXLL motif 1 element; the sequence is LTSLL. Disordered regions lie at residues 609-705, 791-819, 868-895, and 947-1566; these read QITG…HQTE, KLPS…QSTL, LSNS…DDFK, and EHHS…DFMI. Residues 622–632 are compositionally biased toward pro residues; the sequence is PTPPHHTPPPV. Residues 622–701 form an interaction with PPARGC1A and THRA region; that stretch reads PTPPHHTPPP…SSRLPPEKPK (80 aa). Residues 645-649 carry the LXXLL motif 2 motif; that stretch reads LMNLL. The segment covering 655–675 has biased composition (polar residues); sequence QDFSTLYGSSPLERQNSSSGS. An interaction with ESR1 region spans residues 656–1065; it reads DFSTLYGSSP…TPPIPKITIQ (410 aa). Serine 664 is subject to Phosphoserine. The interaction with GATA1 stretch occupies residues 681–715; sequence CSGSNKTKKKESSRLPPEKPKHQTEDDFQRELFSM. Positions 690 to 705 are enriched in basic and acidic residues; sequence KESSRLPPEKPKHQTE. Position 794 is a phosphoserine (serine 794). Threonine 804 is subject to Phosphothreonine. Over residues 807–819 the composition is skewed to polar residues; that stretch reads RDSSSSGHSQSTL. The Integrase domain-binding motif (IBM) motif lies at 874–901; the sequence is QSGFGEEYFDESSQSGDNDDFKGFASQA. Serine 886 and serine 952 each carry phosphoserine. Residues 962–973 are compositionally biased toward basic and acidic residues; the sequence is LGKEKTQKRVKE. Threonine 1031 is modified (phosphothreonine; by MAPK1 or MAPK3). Positions 1033–1050 are enriched in low complexity; it reads PTSTGGSKSPGSSGRSQT. Threonine 1050 and threonine 1056 each carry phosphothreonine. Composition is skewed to low complexity over residues 1077–1093, 1100–1111, and 1119–1156; these read SSHS…SSGS, SSSSSSSSASTS, and SEGS…PGSS. Position 1156 is a phosphoserine (serine 1156). Over residues 1162-1195 the composition is skewed to polar residues; sequence GLSSGSSSTKMKPQGKPSSLMNPSLSKPNISPSH. At lysine 1177 the chain carries N6-acetyllysine. Serine 1207 is modified (phosphoserine). Threonine 1215 bears the Phosphothreonine mark. Low complexity-rich tracts occupy residues 1218-1227 and 1234-1293; these read SSKAKSPISS and MSGT…SKGK. Residue serine 1223 is modified to Phosphoserine. The interval 1249–1421 is interaction with TP53; that stretch reads LGSSGSLSQK…KPGESSGEGL (173 aa). Serine 1302 carries the post-translational modification Phosphoserine. Residues 1330 to 1345 are compositionally biased toward polar residues; the sequence is GVSTNSSSHPMSSKHN. Serine 1347 carries the post-translational modification Phosphoserine. The segment covering 1352 to 1364 has biased composition (basic and acidic residues); sequence QGKREKSDKDKSK. Phosphoserine is present on residues serine 1403 and serine 1433. 2 stretches are compositionally biased toward polar residues: residues 1425-1440 and 1448-1482; these read MASS…SGST and PSHS…SPSS. Threonine 1440 carries the phosphothreonine modification. A Phosphothreonine; by MAPK1 or MAPK3 modification is found at threonine 1457. Phosphoserine occurs at positions 1463, 1465, 1479, 1481, and 1482. Over residues 1496 to 1505 the composition is skewed to basic residues; it reads KHKKHKKEKK. Basic and acidic residues predominate over residues 1506–1522; sequence KVKDKDRDRDRDKDRDK. Lysine 1529 bears the N6-acetyllysine mark. Residues 1533–1552 are compositionally biased toward polar residues; the sequence is WSKSPISSDQSLSMTSNTIL.

Belongs to the Mediator complex subunit 1 family. As to quaternary structure, component of the Mediator complex, which is composed of MED1, MED4, MED6, MED7, MED8, MED9, MED10, MED11, MED12, MED13, MED13L, MED14, MED15, MED16, MED17, MED18, MED19, MED20, MED21, MED22, MED23, MED24, MED25, MED26, MED27, MED29, MED30, MED31, CCNC, CDK8 and CDC2L6/CDK11. The MED12, MED13, CCNC and CDK8 subunits form a distinct module termed the CDK8 module. Mediator containing the CDK8 module is less active than Mediator lacking this module in supporting transcriptional activation. Individual preparations of the Mediator complex lacking one or more distinct subunits have been variously termed ARC, CRSP, DRIP, PC2, SMCC and TRAP. This subunit specifically interacts with a number of nuclear receptors in a ligand-dependent fashion including AR, ESR1, ESR2, PPARA, PPARG, RORA, RXRA, RXRG, THRA, THRB and VDR. Interacts with CTNNB1, GABPA, GLI3, PPARGC1A and TP53. Interacts with GATA1 and YWHAH. Interacts with CLOCK; this interaction requires the presence of THRAP3. Interacts with CCAR1. Interacts with NR4A3. Interacts (via IBM motif) with PSIP1 (via IBD domain); phosphorylation increases its affinity for PSIP1. Interacts with USP22. In terms of processing, phosphorylated by MAPK1 or MAPK3 during G2/M phase which may enhance protein stability and promote entry into the nucleolus. Phosphorylation increases its interaction with PSIP1.

It is found in the nucleus. In terms of biological role, component of the Mediator complex, a coactivator involved in the regulated transcription of nearly all RNA polymerase II-dependent genes. Mediator functions as a bridge to convey information from gene-specific regulatory proteins to the basal RNA polymerase II transcription machinery. Mediator is recruited to promoters by direct interactions with regulatory proteins and serves as a scaffold for the assembly of a functional preinitiation complex with RNA polymerase II and the general transcription factors. Acts as a coactivator for GATA1-mediated transcriptional activation during erythroid differentiation of K562 erythroleukemia cells. This Pongo abelii (Sumatran orangutan) protein is Mediator of RNA polymerase II transcription subunit 1 (MED1).